A 129-amino-acid chain; its full sequence is Small ribosomal subunit protein uS11 (129 aa).

The protein belongs to the universal ribosomal protein uS11 family. As to quaternary structure, part of the 30S ribosomal subunit. Interacts with proteins S7 and S18. Binds to IF-3.

In terms of biological role, located on the platform of the 30S subunit, it bridges several disparate RNA helices of the 16S rRNA. Forms part of the Shine-Dalgarno cleft in the 70S ribosome. The chain is Small ribosomal subunit protein uS11 from Bacteroides thetaiotaomicron (strain ATCC 29148 / DSM 2079 / JCM 5827 / CCUG 10774 / NCTC 10582 / VPI-5482 / E50).